The chain runs to 908 residues: Mycobactin import ATP-binding/permease protein IrtA (908 aa).

The Cytoplasmic segment spans residues 1 to 329 (MARGFQGVML…SRLLAPLKKP (329 aa)). One can recognise an FAD-binding FR-type domain in the interval 15 to 124 (ARDHQATVVD…MGSRGFSVPE (110 aa)). The siderophore interaction domain stretch occupies residues 16–245 (RDHQATVVDK…AQAYWTEGRA (230 aa)). FAD is bound by residues 70 to 73 (RAYT), 87 to 91 (DMVLH), 97 to 98 (AS), and 241 to 243 (TEG). The disordered stretch occupies residues 245–311 (AMGSSRGETS…GAAQPRTPVR (67 aa)). The span at 253-309 (TSTPAKPAAKTAPAKAAAKPAAASGAGTPEHAAAPAAATTGAPQAAPAPGAAQPRTP) shows a compositional bias: low complexity. Residues 330–350 (LIVSGVLQALITLIELAPFVL) traverse the membrane as a helical segment. An ABC transmembrane type-1 domain is found at 331–613 (IVSGVLQALI…IGYGLSGIQT (283 aa)). Residues 351–371 (LVELARLLLGGAEAERLWTLG) lie on the Periplasmic side of the membrane. A helical transmembrane segment spans residues 372–392 (LTAVSLIGLGAVLAAAMTLWL). Topologically, residues 393–444 (HRVDARFAHELRGRLLTKLSRLPLGWFTRRGSASTKQLVQDDTLALHYLITH) are cytoplasmic. A helical transmembrane segment spans residues 445-465 (AIPDAVAAVVAPVAVLVYLFV). Topologically, residues 466–469 (ADWR) are periplasmic. A helical transmembrane segment spans residues 470–490 (VALVLFIPVLVYLVLMSVMTI). The Cytoplasmic portion of the chain corresponds to 491 to 557 (QSGSKIAQAP…PFVGKKTLMD (67 aa)). A helical membrane pass occupies residues 558-578 (LVTRPATFLWIILVAGVPLVV). The Periplasmic segment spans residues 579–586 (TGRMDPVN). A helical transmembrane segment spans residues 587–607 (LLPFLLLGTTFGARLLGIGYG). The Cytoplasmic portion of the chain corresponds to 608–908 (LSGIQTGMLA…VSADAVEVGR (301 aa)). An ABC transporter domain is found at 654–887 (VELDRVSFEY…GGRYRGLWDS (234 aa)). 687 to 694 (GPSGSGKS) is a binding site for ATP.

The protein belongs to the ABC transporter superfamily. Siderophore-Fe(3+) uptake transporter (SIUT) (TC 3.A.1.21) family. Forms a heterodimer with IrtB. It depends on FAD as a cofactor.

It localises to the cell inner membrane. The ATPase activity of IrtAB is stimulated more than 38-fold in the presence of Fe-MBT, and more than 10-fold in the presence of Fe-cMBT. Its function is as follows. Part of the ABC transporter complex IrtAB involved in the import of iron-bound mycobactin (Fe-MBT) and carboxymycobactin (Fe-cMBT). Has a preference for Fe-MBT over Fe-cMBT. Mycobactins are then reduced by the siderophore interaction domain to facilitate iron release in the bacterial cell. Transmembrane domains (TMD) form a pore in the membrane and the ATP-binding domain (NBD) is responsible for energy generation. This Mycolicibacterium thermoresistibile (strain ATCC 19527 / DSM 44167 / CIP 105390 / JCM 6362 / NCTC 10409 / 316) (Mycobacterium thermoresistibile) protein is Mycobactin import ATP-binding/permease protein IrtA.